A 355-amino-acid chain; its full sequence is Uroporphyrinogen decarboxylase (355 aa).

Residues 27 to 31 (RQAGR), Asp77, Tyr154, Thr209, and His328 contribute to the substrate site.

It belongs to the uroporphyrinogen decarboxylase family. Homodimer.

It localises to the cytoplasm. It carries out the reaction uroporphyrinogen III + 4 H(+) = coproporphyrinogen III + 4 CO2. It participates in porphyrin-containing compound metabolism; protoporphyrin-IX biosynthesis; coproporphyrinogen-III from 5-aminolevulinate: step 4/4. Functionally, catalyzes the decarboxylation of four acetate groups of uroporphyrinogen-III to yield coproporphyrinogen-III. This chain is Uroporphyrinogen decarboxylase, found in Aliivibrio fischeri (strain ATCC 700601 / ES114) (Vibrio fischeri).